A 148-amino-acid polypeptide reads, in one-letter code: Large ribosomal subunit protein bL9 (148 aa).

The protein belongs to the bacterial ribosomal protein bL9 family.

In terms of biological role, binds to the 23S rRNA. The sequence is that of Large ribosomal subunit protein bL9 from Heliobacterium modesticaldum (strain ATCC 51547 / Ice1).